A 623-amino-acid chain; its full sequence is Sphingomyelinase C 2 (623 aa).

The signal sequence occupies residues 1–25 (MINKITKPKLLIGYYLLLFSLIRCL). Composition is skewed to low complexity over residues 51–61 (VNSVSINNDPA) and 67–80 (NPAS…NAVP). Residues 51 to 121 (VNSVSINNDP…DPNPANLASA (71 aa)) are disordered. Residues 89–102 (NPVNPASANSNQVN) show a composition bias toward polar residues. Over residues 110-121 (PADPNPANLASA) the composition is skewed to low complexity.

The protein resides in the secreted. The enzyme catalyses a sphingomyelin + H2O = phosphocholine + an N-acylsphing-4-enine + H(+). The polypeptide is Sphingomyelinase C 2 (sph2) (Leptospira interrogans serogroup Icterohaemorrhagiae serovar Lai (strain 56601)).